Reading from the N-terminus, the 106-residue chain is Gibberellin-regulated protein 12 (106 aa).

Residues Met1 to Gly22 form the signal peptide.

The protein belongs to the GASA family. Post-translationally, six disulfide bonds may be present.

The protein resides in the secreted. Functionally, gibberellin-regulated protein that may function in hormonal controlled steps of development such as seed germination, flowering and seed maturation. This is Gibberellin-regulated protein 12 (GASA12) from Arabidopsis thaliana (Mouse-ear cress).